The chain runs to 99 residues: Prostate and testis expressed protein 14 (99 aa).

The first 21 residues, 1–21 (MEKYLLLLLLGIFLRVGFLQA), serve as a signal peptide directing secretion. One can recognise a UPAR/Ly6 domain in the interval 22-99 (LTCVSCGRLN…CDHQNLCNKP (78 aa)). Intrachain disulfides connect Cys24–Cys51, Cys27–Cys36, Cys43–Cys69, Cys73–Cys89, and Cys90–Cys96. An N-linked (GlcNAc...) asparagine glycan is attached at Asn31. Asn75 carries N-linked (GlcNAc...) asparagine glycosylation.

Belongs to the PATE family. In terms of assembly, monomer. Glycosylated. In terms of tissue distribution, predominantly expressed in the seminal vesicles. Expressed in prostate, and to a lesser extent in the cauda epididymis.

It is found in the secreted. This chain is Prostate and testis expressed protein 14, found in Mus musculus (Mouse).